A 386-amino-acid polypeptide reads, in one-letter code: Probable Xaa-Pro aminopeptidase PMAA_074180 (386 aa).

Residues aspartate 160, aspartate 171, glutamate 311, and glutamate 350 each contribute to the Mn(2+) site.

Belongs to the peptidase M24B family. Requires Mn(2+) as cofactor.

It carries out the reaction Release of any N-terminal amino acid, including proline, that is linked to proline, even from a dipeptide or tripeptide.. Its function is as follows. Catalyzes the removal of a penultimate prolyl residue from the N-termini of peptides. This Talaromyces marneffei (strain ATCC 18224 / CBS 334.59 / QM 7333) (Penicillium marneffei) protein is Probable Xaa-Pro aminopeptidase PMAA_074180.